The following is a 146-amino-acid chain: Snaclec anticoagulant protein subunit B (146 aa).

A signal peptide spans 1–23 (MGRFIFVSFGLLVLFLSLSGTAA). One can recognise a C-type lectin domain in the interval 24-146 (DCPSDWSSYE…IANFVCEFQA (123 aa)). 3 cysteine pairs are disulfide-bonded: cysteine 25/cysteine 36, cysteine 53/cysteine 142, and cysteine 119/cysteine 134. Ca(2+) contacts are provided by serine 64, glutamine 66, and glutamate 70. Glutamate 143 is a Ca(2+) binding site.

Belongs to the snaclec family. In terms of assembly, heterodimer with subunit A of agkisacutacin or AaACP; disulfide-linked. As to expression, expressed by the venom gland.

The protein localises to the secreted. Its function is as follows. Anticoagulant protein which binds to the gamma-carboxyglutamic acid-domain regions of factors IX and factor X in the presence of calcium with a 1 to 1 stoichiometry. Also inhibits platelet aggregation by binding to platelet glycoprotein Ibalpha (GP1BA) and functioning as a blocker of vWF. Is devoid of hemorrhagic and lethal activities. Possesses antithrombotic and thrombolytic activities. Also hydrolyzes the Aalpha-chain of fibrinogen. Does not affect the Bbeta-chain and the gamma chain. The sequence is that of Snaclec anticoagulant protein subunit B from Deinagkistrodon acutus (Hundred-pace snake).